A 294-amino-acid polypeptide reads, in one-letter code: Ribosomal protein L11 methyltransferase (294 aa).

The S-adenosyl-L-methionine site is built by Thr146, Gly167, Asp189, and Asn231.

It belongs to the methyltransferase superfamily. PrmA family.

The protein resides in the cytoplasm. The catalysed reaction is L-lysyl-[protein] + 3 S-adenosyl-L-methionine = N(6),N(6),N(6)-trimethyl-L-lysyl-[protein] + 3 S-adenosyl-L-homocysteine + 3 H(+). Functionally, methylates ribosomal protein L11. This is Ribosomal protein L11 methyltransferase from Aliivibrio salmonicida (strain LFI1238) (Vibrio salmonicida (strain LFI1238)).